The primary structure comprises 308 residues: 3'(2'),5'-bisphosphate nucleotidase 1 (308 aa).

An N-acetylalanine modification is found at Ala-2. Asp-51 (proton acceptor) is an active-site residue. Mg(2+) is bound by residues Glu-74, Asp-117, Val-119, and Asp-120. The Proton acceptor role is filled by Thr-122. Thr-122 is modified (phosphothreonine). AMP-binding residues include Thr-195, His-198, Gly-220, and Lys-224. The residue at position 240 (Ser-240) is a Phosphoserine. Lys-244 is subject to N6-succinyllysine. Asp-247 is a binding site for Mg(2+).

The protein belongs to the inositol monophosphatase superfamily. It depends on Mg(2+) as a cofactor. As to expression, highly expressed in heart, brain, spleen, lung, liver, skeletal muscle, kidney and testis.

It catalyses the reaction adenosine 3',5'-bisphosphate + H2O = AMP + phosphate. The enzyme catalyses adenosine 2',5'-bisphosphate + H2O = AMP + phosphate. It carries out the reaction 3'-phosphoadenylyl sulfate + H2O = adenosine 5'-phosphosulfate + phosphate. The catalysed reaction is 1D-myo-inositol 1,4-bisphosphate + H2O = 1D-myo-inositol 4-phosphate + phosphate. It catalyses the reaction 1D-myo-inositol 1,3,4-trisphosphate + H2O = 1D-myo-inositol 3,4-bisphosphate + phosphate. Inhibited by Li(+) and Ca(2+), but not by Na(+). Phosphatase that converts 3'(2')-phosphoadenosine 5'-phosphate (PAP) to AMP and adenosine 3'-phosphate 5'-phosphosulfate (PAPS) to adenosine 5'-phosphosulfate (APS). Is also able to hydrolyze inositol 1,4-bisphosphate (Ins(1,4)P2) and inositol 1,3,4-trisphosphate (Ins(1,3,4)P3), but is not active on AMP, 3'-AMP, fructose-1,6-bisphosphate, Ins(1)P, Ins(2)P and Ins(1,4,5)P3. Probably prevents the toxic accumulation of PAP, a compound which inhibits a variety of proteins, including PAPS-utilizing enzymes such as sulfotransferases, and RNA processing enzymes. Could also play a role in inositol recycling and phosphoinositide metabolism. This Rattus norvegicus (Rat) protein is 3'(2'),5'-bisphosphate nucleotidase 1 (Bpnt1).